Reading from the N-terminus, the 310-residue chain is Protein-L-isoaspartate O-methyltransferase (310 aa).

2 disordered regions span residues 1-44 (MSGE…DKPA) and 67-88 (AKPA…PAAP). Residues 14–29 (EDLKRAPRKSEGRPGE) are compositionally biased toward basic and acidic residues. Positions 32-44 (AAGAVPKAADKPA) are enriched in low complexity. A compositionally biased stretch (pro residues) spans 75 to 86 (PTAPKPALPKPA). Ser-157 is an active-site residue.

Belongs to the methyltransferase superfamily. L-isoaspartyl/D-aspartyl protein methyltransferase family.

The protein localises to the cytoplasm. The enzyme catalyses [protein]-L-isoaspartate + S-adenosyl-L-methionine = [protein]-L-isoaspartate alpha-methyl ester + S-adenosyl-L-homocysteine. In terms of biological role, catalyzes the methyl esterification of L-isoaspartyl residues in peptides and proteins that result from spontaneous decomposition of normal L-aspartyl and L-asparaginyl residues. It plays a role in the repair and/or degradation of damaged proteins. This chain is Protein-L-isoaspartate O-methyltransferase, found in Burkholderia orbicola (strain MC0-3).